The sequence spans 61 residues: Potassium channel toxin alpha-KTx 15.6 (61 aa).

The first 23 residues, 1 to 23 (MKAFYGMLVIFILCSTCYISVDS), serve as a signal peptide directing secretion. Glutamine 24 bears the Pyrrolidone carboxylic acid mark. Intrachain disulfides connect cysteine 31/cysteine 52, cysteine 37/cysteine 57, and cysteine 41/cysteine 59.

It belongs to the short scorpion toxin superfamily. Potassium channel inhibitor family. Alpha-KTx 15 subfamily. In terms of tissue distribution, expressed by the venom gland.

It localises to the secreted. Functionally, irreversibly blocks the A-type voltage-gated potassium channels in rat cerebellum granular cells (190 nM induce 50% inhibitory effect) (IC(50)=190 nM). Also weakly inhibits Kv1.2/KCNA2 and Kv1.3/KCNA3. The protein is Potassium channel toxin alpha-KTx 15.6 of Tityus discrepans (Venezuelan scorpion).